The following is a 2300-amino-acid chain: MMLQLLLFCLALFIFVYWVLPTGISWYLVKRFRVKVRIGRISLPYLSLKNVHISKSGFSVQIEEVCLRSSFFTTEVTKLLSIYIRDIRINKDIHSRQDDSYDQDSYELRRTQTLAGKASEAKGVPDFRQTKVPASIITFAQFMAVHVNNISVVLMNNDFDPGWFIHATAKELHLDGSIVQNARVLLVNAALSEAQAKMLRHCSSRRQSLENLNKIRPCLGEVSFDMTLDASLFAQGPLSMDTLSLVINNAKSVIHGGLYEFLSEAKRRTSTGQPSRRSTQGLAPSKRSYDNDNYEKLAPIIPKNFNFSIKAATFSAVKENSQNDFSAKLQSFQISGKFNSKVTDEKTLLPSMLAKLGFHHLDIDTKYEKLLFVEQFTIDSVLEKDIFNLYVKLKTFQIIYNHSEIYDFVNNNFLARQRSSEAQPMQLIHKQKSLPDHLDLDTAVQSNLRANQRREGGVLEWIMQRIVVKGCAELFNVSLLMKLEDEHIAMSVSHTRFLLEQIEEKRSNLYENKFLNLLLNQRQWSMELMVETLWSNLGNSINDTNNLKKTHSPGSPFFLGVSLVKLCSYANTTKLDISVHTFRTEYSMQLAEFVVKSMECLRQYRGIKPKNMSGQSHARPNAGLTLSVQPSQSSTSLRVSVKVKDITAYFVNHHNVYSLLSFSELNLSRSQSLTTLKLEEFQMAIMRSMTASSLCLTDFSDVFATCKMIRLEHEQVEGTMGKLSIYIPGNMEATWNSNLHMHLLTLVRDMQDLKTELAIPASSVKKTTPKEGFIVELSAERSTIFEIKFSDRHSIQIFVESLFFSQKERCIIYAENVFVKIDDQHIFTVKELDLQSVPRLEVLTQERQNFPGFQLPSNKVWVTTIGSFKAIFPYDHDFYNAVNGECTSHFKWLKMVHNYKKKPFTVDSPLPCDLVIKIKEFLLEISDDPFEVKLRDNYVLLVDEYLESLKRKALFDKKIGELCSERLLLPSGTIEGLYANLVKKNSEIYIQRSKKIRESGPVRTRLLAWIMTDVNIMAMADTSIHGYNNVTRIMREIDHESPWPEEGLEFSTLWCRGVNISCTEWKFMLRDFPQPMFCVKSMRLYGNLCGAEQMGSKRAKRDVFIDVGEPFGTDVIQRSMPSLKFYHDFDCELESCSYAFGACWEPVMAQCNLSFEKISAPSKDPSPPLPFWDKLRLLLHGRLTLIAKQFTILLHASLDPYNTTEEMELTWNNCGIVLTNAKIMFKGELNVTVRTASRYDDCRLLHFPNLKLTIKLKWVCLANPNDHHAVMPCAPDKLPEYSSNQVHDSFRAFRSLNLNIWISFETKPKAGEDLEVDIPSLVLYGSTLRWFESLQLILSGVTRPTRRGPVFNNVRPRKKPLSRHYKKANLQMCLHKFQVLYWMSHALQKGFQLNGRRVSFSSEHSLTLNPIDDGLIHRPRADWSTIYMNCELNDAEIWLKSILTEKMDSSSENLASAADAFKIVRFYFLSVAKVSYGREALIPTTATSTEEDVKAQSTTPTHKLVVYDLKGAWTKSNRDVAFALFDSFMKSQKLKNNLSTEAVKSYRKEGPNSAVLKHKRSDSTITLSSTNNEVLPISNPNASMKKAPAQIHATAMLQQLIAEADHKFNVYSDDHSTQSRELQLQGLQACSAQDIIHENWSISLVNSQVLLKGCETSGYVIISAAKAEILQREHRPVWRERSLISKTTWKGLLECMQYYATVSAGDNNSLLEKEIMWLTVDNIQDKDETVINNLPDISHLVGSGRSVGGVVSETVGAFLSDNSGGAQPVQLQRIVSKCKCEFFYVSYGDAIDPNSITEVPPPPSEELQSPWEKQDDPVDAFTLMHHDLDVCTNSLQYAMILDIVNNLLLYVEPQRKQAAEKLTRMRFQLQLHSTEDQKRPIQQKQTVIRSLLMKIRSLEKDTHMISKERIEDGDSLELRQEYDHVQQMIRESKEELNTFSEDLDMMLLCYKETQLSQLSKISNVRSDESVTMVRTNEICFKRAQWRLTETDGQIGIADLVLSAFLYTKKSKSDDSVEHLLELGNIRMENLLPREIYRDVLLATEIQKDMPVDTHKRVLRIFCREKAPVGGISVKEHFEINVAPITIAITKKFYSTMLKFCFPDRDASETEVSDELDDNASTSSASTTNLQAKSSTSSSTKRSGKGKKGAKDSEFYVKIEKDDVEKMKERAEKNKLFIYIKIPEVPVRVSYKGNKEKNLEDITDYSLVIPTLEYHNVTWTWLDLLLAMKSVSRRVIFSQAIKQKLHIHQRQPILSAGERATPQEAEDKAVMLFGNRLLNENRNQKKGVFKFASSGKRSGND.

A signal peptide spans M1–P21. Residues G23–K117 are transmembrane domain. Disordered regions lie at residues T269–D290 and V2111–G2148. Positions S270–L282 are enriched in polar residues. The segment at V1750–D2300 is required for endoplasmic reticulum-cell membrane contact sites location and binding to phosphatidylinositols. A compositionally biased stretch (low complexity) spans A2119–K2140.

Its subcellular location is the cell membrane. It is found in the endoplasmic reticulum membrane. The protein localises to the mitochondrion membrane. Tube-forming lipid transport protein which binds to phosphatidylinositols and affects phosphatidylinositol-4,5-bisphosphate (PtdIns-4,5-P2) distribution. The polypeptide is Protein hobbit (Drosophila melanogaster (Fruit fly)).